The chain runs to 41 residues: Plantazolicin (41 aa).

Residues 1-27 constitute a propeptide that is removed on maturation; the sequence is MTKITIPTALSAKVHGEGQHLFEPMAA. R28 carries the N2,N2-dimethylarginine; in form plantazolicin A modification. Positions 28 to 29 form a cross-link, thiazole-4-carboxylic acid (Arg-Cys); it reads RC. Cross-links (5-methyloxazole-4-carboxylic acid (Cys-Thr)) lie at residues 29–30 and 31–32; these read CT. The thiazole-4-carboxylic acid (Thr-Cys) cross-link spans 30-31; sequence TC. The segment at residues 32–33 is a cross-link (5-methyloxazole-4-carboxylic acid (Thr-Thr)); it reads TT. The oxazole-4-carboxylic acid (Ile-Ser) cross-link spans 35–36; the sequence is IS. Cross-links (oxazole-4-carboxylic acid (Ser-Ser)) lie at residues 36–37, 37–38, and 38–39; these read SS. The segment at residues 39–40 is a cross-link (5-methyloxazoline-4-carboxylic acid (Ser-Thr)); that stretch reads ST.

In terms of processing, maturation of thiazole and oxazole containing antibiotics involves the enzymatic condensation of a Cys, Ser or Thr with the alpha-carbonyl of the preceding amino acid to form a thioether or ether bond, then dehydration to form a double bond with the alpha-amino nitrogen. Thiazoline or oxazoline ring are dehydrogenated to form thiazole or oxazole rings.

It localises to the secreted. It is found in the cell wall. In terms of biological role, peptide antibiotic inhibiting growth of Gram-positive bacteria. The mode of action appears to be disruption of cell walls and lysis of cells. This Bacillus pumilus (strain ATCC 7061 / DSM 27 / CCUG 26015 / JCM 2508 / NBRC 12092 / NCIMB 9369 / NCTC 10337 / NRRL NRS-272 / CCM 2144) protein is Plantazolicin.